The primary structure comprises 143 residues: Large ribosomal subunit protein uL13 (143 aa).

Belongs to the universal ribosomal protein uL13 family. As to quaternary structure, part of the 50S ribosomal subunit.

In terms of biological role, this protein is one of the early assembly proteins of the 50S ribosomal subunit, although it is not seen to bind rRNA by itself. It is important during the early stages of 50S assembly. This is Large ribosomal subunit protein uL13 from Coprothermobacter proteolyticus (strain ATCC 35245 / DSM 5265 / OCM 4 / BT).